The primary structure comprises 340 residues: Selenide, water dikinase (340 aa).

Residue Cys-13 is part of the active site. Residues Lys-16 and 43 to 45 contribute to the ATP site; that span reads ASD. A Mg(2+)-binding site is contributed by Asp-46. Residues Asp-63, Asp-86, and 133 to 135 contribute to the ATP site; that span reads GHS. Asp-86 is a binding site for Mg(2+). Asp-221 contacts Mg(2+).

This sequence belongs to the selenophosphate synthase 1 family. Class I subfamily. In terms of assembly, homodimer. It depends on Mg(2+) as a cofactor.

The enzyme catalyses hydrogenselenide + ATP + H2O = selenophosphate + AMP + phosphate + 2 H(+). Synthesizes selenophosphate from selenide and ATP. The protein is Selenide, water dikinase of Desulfitobacterium hafniense (strain DSM 10664 / DCB-2).